The primary structure comprises 271 residues: uncharacterized protein (271 aa).

This is an uncharacterized protein from Human cytomegalovirus (strain Merlin) (HHV-5).